A 673-amino-acid chain; its full sequence is G-protein-signaling modulator 1 (673 aa).

A mediates association with membranes region spans residues Met-1–Arg-507. 9 TPR repeats span residues Cys-28–Asp-61, Ser-66–Ile-99, Ala-106–Gln-139, Ala-146–Val-178, Glu-180–Leu-199, Gly-206–Phe-239, Arg-246–Ile-279, Ala-286–Leu-319, and Gly-326–Ile-359. Residues Asp-361–Ile-485 form an interaction with STK11/LKB1 region. Phosphoserine is present on Ser-410. Arg-418 carries the post-translational modification Omega-N-methylarginine. Positions Pro-420–Ser-439 are enriched in basic and acidic residues. The segment at Pro-420–Arg-477 is disordered. Residues Ser-442, Ser-467, Ser-469, Ser-490, and Ser-491 each carry the phosphoserine modification. Residues Lys-451–Ser-467 show a composition bias toward basic and acidic residues. Positions Glu-493–Leu-515 constitute a GoLoco 1 domain. Residues Asp-510 to Pro-544 are disordered. Residues Glu-516–Thr-530 are compositionally biased toward low complexity. Phosphoserine is present on residues Ser-543 and Ser-567. GoLoco domains are found at residues Thr-546–Val-568, Gly-594–Pro-616, and Asp-628–Leu-650. 2 disordered regions span residues Ile-609–Asp-628 and Glu-645–Ser-673. Position 653 is a phosphoserine (Ser-653).

This sequence belongs to the GPSM family. In terms of assembly, interacts with INSC/inscuteable and FRMPD1. Interacts with GNAI1, GNAI2 and GNAI3 preferentially in their GDP-bound state. May also interact with GNAO1. Interacts with STK11/LKB1 and MACF1. Post-translationally, phosphorylation regulates interaction with G(i/o) alpha. Isoform 4 is specifically expressed in brain by neurons and also detected in testis, liver, kidney, heart and pancreas (at protein level). Highly expressed in cerebellum and subventricular zone-olfactory bulb system. Isoform 2 and isoform 3 are specifically expressed in heart and are also detected in brain.

It is found in the endoplasmic reticulum membrane. It localises to the golgi apparatus membrane. The protein localises to the cell membrane. Its subcellular location is the cytoplasm. The protein resides in the cytosol. Its function is as follows. Guanine nucleotide dissociation inhibitor (GDI) which functions as a receptor-independent activator of heterotrimeric G-protein signaling. Keeps G(i/o) alpha subunit in its GDP-bound form thus uncoupling heterotrimeric G-proteins signaling from G protein-coupled receptors. Controls spindle orientation and asymmetric cell fate of cerebral cortical progenitors. May also be involved in macroautophagy in intestinal cells. May play a role in drug addiction. The protein is G-protein-signaling modulator 1 (Gpsm1) of Rattus norvegicus (Rat).